The following is a 394-amino-acid chain: Elongation factor Tu (394 aa).

Residues 10–204 enclose the tr-type G domain; sequence KPHVNVGTIG…HLDSYIPEPE (195 aa). The G1 stretch occupies residues 19–26; the sequence is GHVDHGKT. 19-26 contributes to the GTP binding site; the sequence is GHVDHGKT. Thr-26 contacts Mg(2+). The G2 stretch occupies residues 60–64; the sequence is GITIN. Residues 81–84 are G3; sequence DCPG. GTP-binding positions include 81-85 and 136-139; these read DCPGH and NKCD. A G4 region spans residues 136–139; the sequence is NKCD. The G5 stretch occupies residues 174–176; sequence SAL.

This sequence belongs to the TRAFAC class translation factor GTPase superfamily. Classic translation factor GTPase family. EF-Tu/EF-1A subfamily. Monomer.

The protein resides in the cytoplasm. The enzyme catalyses GTP + H2O = GDP + phosphate + H(+). GTP hydrolase that promotes the GTP-dependent binding of aminoacyl-tRNA to the A-site of ribosomes during protein biosynthesis. The sequence is that of Elongation factor Tu from Cronobacter sakazakii (strain ATCC BAA-894) (Enterobacter sakazakii).